The sequence spans 1284 residues: Zinc finger protein 423 (1284 aa).

Disordered stretches follow at residues 1 to 64 (MHKK…MEDE) and 87 to 117 (AHRC…SPTQ). Basic and acidic residues predominate over residues 34 to 46 (CDQKTSRALEDRN). Residues serine 47 and serine 50 each carry the phosphoserine modification. Positions 54–64 (RNEDDEDMEDE) are enriched in acidic residues. The C2H2-type 1; degenerate zinc finger occupies 67–93 (YTCDHCQQDFESLADLTDHRAHRCPGD). Over residues 102 to 117 (WVASSPSSKDVASPTQ) the composition is skewed to polar residues. 7 consecutive C2H2-type zinc fingers follow at residues 138-160 (YPCQ…EQIH), 166-188 (FKCT…IKLH), 194-216 (YHCH…LKTH), 222-244 (FKCT…MQAH), 263-286 (FMCD…LTRH), 295-318 (LQCI…HQAH), and 323-345 (HKCP…LDSH). The segment at 346–398 (RQPDSSNHSVSPDPVLGSVASMSSATPDSSASVERGSTPDSTLKPLRGQKKMR) is disordered. The span at 363–377 (SVASMSSATPDSSAS) shows a compositional bias: low complexity. The C2H2-type 9; degenerate zinc finger occupies 409-433 (YSCPYCSKRDFNSLAVLEIHLKTIH). 3 C2H2-type zinc fingers span residues 441-464 (HTCQ…RKLH), 480-503 (FHCN…RVSH), and 517-540 (FFCN…QQAH). The C2H2-type 13; atypical zinc-finger motif lies at 563–588 (YSCPYCTNSPIFGSILKLTKHIKENH). Residues 590–624 (NIPLAHSKKSKAEQSPVSSDVEVSSPKRQRLSASA) form a disordered region. Serine 604 is modified (phosphoserine). Residues 604 to 615 (SPVSSDVEVSSP) are compositionally biased toward low complexity. 7 consecutive C2H2-type zinc fingers follow at residues 632 to 654 (YPCN…LKLH), 662 to 684 (QACP…LTVH), 692 to 715 (YVCE…LDMH), 720 to 743 (YHCT…AVKH), 750 to 773 (YRCT…KHSH), 781 to 803 (HKCI…ITTH), and 807 to 830 (YNCK…REKH). The C2H2-type 21; degenerate zinc-finger motif lies at 886 to 908 (YGCDICGAAYTMEVLLQNHRLRD). 3 consecutive C2H2-type zinc fingers follow at residues 930-952 (HKCN…LQTH), 959-981 (YMCP…KVTH), and 1020-1042 (FRCV…GTFH). Position 1054 is a phosphoserine (serine 1054). The segment at 1064-1082 (YKCALCLKEFRSKQDLVKL) adopts a C2H2-type 25; degenerate zinc-finger fold. 5 C2H2-type zinc fingers span residues 1120–1143 (LRCP…QVDH), 1168–1190 (YQCI…VANH), 1198–1220 (HECK…LIEH), 1229–1252 (FKCP…FAVH), and 1259–1282 (YDCS…MSQH). The span at 1136-1147 (ESHMQVDHRDLT) shows a compositional bias: basic and acidic residues. The interval 1136-1163 (ESHMQVDHRDLTPETSGPRKGTQTSPVP) is disordered.

It belongs to the krueppel C2H2-type zinc-finger protein family. As to quaternary structure, homodimer. Interacts with EBF1. Interacts with SMAD1 and SMAD4. Interacts with PARP1. Interacts with CEP290. As to expression, expressed in brain, lung, skeletal muscle, heart, pancreas and kidney but not liver or placenta. Also expressed in aorta, ovary, pituitary, small intestine, fetal brain, fetal kidney and, within the adult brain, in the substantia nigra, medulla, amygdala, thalamus and cerebellum.

Its subcellular location is the nucleus. Its function is as follows. Transcription factor that can both act as an activator or a repressor depending on the context. Plays a central role in BMP signaling and olfactory neurogenesis. Associates with SMADs in response to BMP2 leading to activate transcription of BMP target genes. Acts as a transcriptional repressor via its interaction with EBF1, a transcription factor involved in terminal olfactory receptor neurons differentiation; this interaction preventing EBF1 to bind DNA and activate olfactory-specific genes. Involved in olfactory neurogenesis by participating in a developmental switch that regulates the transition from differentiation to maturation in olfactory receptor neurons. Controls proliferation and differentiation of neural precursors in cerebellar vermis formation. The sequence is that of Zinc finger protein 423 (ZNF423) from Homo sapiens (Human).